Reading from the N-terminus, the 400-residue chain is 1-deoxy-D-xylulose 5-phosphate reductoisomerase (400 aa).

The NADPH site is built by Thr-10, Gly-11, Ser-12, Ile-13, Gly-36, Asn-38, and Asn-124. A 1-deoxy-D-xylulose 5-phosphate-binding site is contributed by Lys-125. Residue Glu-126 participates in NADPH binding. Asp-150 contacts Mn(2+). Residues Ser-151, Glu-152, Ser-186, and His-209 each coordinate 1-deoxy-D-xylulose 5-phosphate. Glu-152 is a binding site for Mn(2+). Gly-215 provides a ligand contact to NADPH. Residues Ser-222, Asn-227, Lys-228, and Glu-231 each contribute to the 1-deoxy-D-xylulose 5-phosphate site. Residue Glu-231 participates in Mn(2+) binding.

This sequence belongs to the DXR family. It depends on Mg(2+) as a cofactor. Mn(2+) serves as cofactor.

The enzyme catalyses 2-C-methyl-D-erythritol 4-phosphate + NADP(+) = 1-deoxy-D-xylulose 5-phosphate + NADPH + H(+). Its pathway is isoprenoid biosynthesis; isopentenyl diphosphate biosynthesis via DXP pathway; isopentenyl diphosphate from 1-deoxy-D-xylulose 5-phosphate: step 1/6. Catalyzes the NADPH-dependent rearrangement and reduction of 1-deoxy-D-xylulose-5-phosphate (DXP) to 2-C-methyl-D-erythritol 4-phosphate (MEP). In Aliivibrio fischeri (strain MJ11) (Vibrio fischeri), this protein is 1-deoxy-D-xylulose 5-phosphate reductoisomerase.